The chain runs to 218 residues: uncharacterized protein (218 aa).

Transmembrane regions (helical) follow at residues 8 to 28 (LAVF…ATAG) and 158 to 178 (ILFY…FLLI).

The protein resides in the cell membrane. This is an uncharacterized protein from Mycoplasma genitalium (strain ATCC 33530 / DSM 19775 / NCTC 10195 / G37) (Mycoplasmoides genitalium).